The primary structure comprises 703 residues: Polyribonucleotide nucleotidyltransferase (703 aa).

Asp485 and Asp491 together coordinate Mg(2+). A KH domain is found at 552 to 611 (PRIYTLKIDQDKIRDVIGKGGAMIRSITEASDTNIEIEDDGTIKIFATERAKADIAISKI). The S1 motif domain occupies 621–689 (GKTYEGKVTR…RQNRVRLSIK (69 aa)).

It belongs to the polyribonucleotide nucleotidyltransferase family. In terms of assembly, component of the RNA degradosome, which is a multiprotein complex involved in RNA processing and mRNA degradation. Mg(2+) serves as cofactor.

It is found in the cytoplasm. It carries out the reaction RNA(n+1) + phosphate = RNA(n) + a ribonucleoside 5'-diphosphate. Involved in mRNA degradation. Catalyzes the phosphorolysis of single-stranded polyribonucleotides processively in the 3'- to 5'-direction. This Pseudoalteromonas atlantica (strain T6c / ATCC BAA-1087) protein is Polyribonucleotide nucleotidyltransferase.